Consider the following 1083-residue polypeptide: Ubiquitin carboxyl-terminal hydrolase 1 (1083 aa).

Residues 30-165 form a UBP-type zinc finger; the sequence is RSCVHFDKYV…KKDLLLEVVK (136 aa). Positions 32, 34, 56, 59, 95, 98, 103, 115, 119, 125, 139, and 142 each coordinate Zn(2+). In terms of domain architecture, USP spans 202-1083; that stretch reads RGLVNLGNTC…EAYILFYERI (882 aa). Cysteine 211 acts as the Nucleophile in catalysis. Disordered stretches follow at residues 387–424 and 450–486; these read KDSE…DNET and GSTE…ASGI. Basic and acidic residues-rich tracts occupy residues 409-419 and 455-473; these read SDHKIQSRPET and LMHD…EDVR. A compositionally biased stretch (polar residues) spans 474–485; it reads ATQSNEETSASG. Catalysis depends on histidine 1029, which acts as the Proton acceptor.

Belongs to the peptidase C19 family.

The catalysed reaction is Thiol-dependent hydrolysis of ester, thioester, amide, peptide and isopeptide bonds formed by the C-terminal Gly of ubiquitin (a 76-residue protein attached to proteins as an intracellular targeting signal).. In terms of biological role, recognizes and hydrolyzes the peptide bond at the C-terminal Gly of ubiquitin. Involved in the processing of poly-ubiquitin precursors as well as that of ubiquitinated proteins. Is involved in resistance to the arginine analog canavanine (CAN). This chain is Ubiquitin carboxyl-terminal hydrolase 1 (UBP1), found in Arabidopsis thaliana (Mouse-ear cress).